A 122-amino-acid polypeptide reads, in one-letter code: Small ribosomal subunit protein uS13 (122 aa).

Residues 93–122 (RLSLPVRGQRTKTNSRTRKGKRKTVAGKKK) are disordered. Residues 101-122 (QRTKTNSRTRKGKRKTVAGKKK) are compositionally biased toward basic residues.

It belongs to the universal ribosomal protein uS13 family. Part of the 30S ribosomal subunit. Forms a loose heterodimer with protein S19. Forms two bridges to the 50S subunit in the 70S ribosome.

Located at the top of the head of the 30S subunit, it contacts several helices of the 16S rRNA. In the 70S ribosome it contacts the 23S rRNA (bridge B1a) and protein L5 of the 50S subunit (bridge B1b), connecting the 2 subunits; these bridges are implicated in subunit movement. Contacts the tRNAs in the A and P-sites. This Chlamydia caviae (strain ATCC VR-813 / DSM 19441 / 03DC25 / GPIC) (Chlamydophila caviae) protein is Small ribosomal subunit protein uS13.